Reading from the N-terminus, the 290-residue chain is Glutamate racemase (290 aa).

Substrate is bound by residues 32–33 (DS) and 64–65 (YG). C96 (proton donor/acceptor) is an active-site residue. 97–98 (NT) lines the substrate pocket. Residue C208 is the Proton donor/acceptor of the active site. 209–210 (TH) serves as a coordination point for substrate.

The protein belongs to the aspartate/glutamate racemases family.

The catalysed reaction is L-glutamate = D-glutamate. It participates in cell wall biogenesis; peptidoglycan biosynthesis. Functionally, provides the (R)-glutamate required for cell wall biosynthesis. This chain is Glutamate racemase, found in Sodalis glossinidius (strain morsitans).